A 500-amino-acid chain; its full sequence is Chromosomal replication initiator protein DnaA (500 aa).

Residues 1–81 (MVNASGDPVI…LQALRTVTGE (81 aa)) form a domain I, interacts with DnaA modulators region. The tract at residues 81-155 (ENMFPAFKVV…QQKMNRDPET (75 aa)) is domain II. Positions 156–377 (HLNKNFTFDS…GALTRVTAVA (222 aa)) are domain III, AAA+ region. ATP contacts are provided by Gly-200, Gly-202, Lys-203, and Thr-204. The segment at 378–500 (SLSNQPVTRA…TVRLKQSNTN (123 aa)) is domain IV, binds dsDNA.

Belongs to the DnaA family. As to quaternary structure, oligomerizes as a right-handed, spiral filament on DNA at oriC.

It is found in the cytoplasm. Plays an essential role in the initiation and regulation of chromosomal replication. ATP-DnaA binds to the origin of replication (oriC) to initiate formation of the DNA replication initiation complex once per cell cycle. Binds the DnaA box (a 9 base pair repeat at the origin) and separates the double-stranded (ds)DNA. Forms a right-handed helical filament on oriC DNA; dsDNA binds to the exterior of the filament while single-stranded (ss)DNA is stabiized in the filament's interior. The ATP-DnaA-oriC complex binds and stabilizes one strand of the AT-rich DNA unwinding element (DUE), permitting loading of DNA polymerase. After initiation quickly degrades to an ADP-DnaA complex that is not apt for DNA replication. Binds acidic phospholipids. This chain is Chromosomal replication initiator protein DnaA, found in Bifidobacterium longum subsp. infantis (strain ATCC 15697 / DSM 20088 / JCM 1222 / NCTC 11817 / S12).